The primary structure comprises 142 residues: RNA polymerase-binding transcription factor DksA (142 aa).

3 disordered regions span residues 1–20, 51–70, and 119–142; these read MQTA…EDEP, HLQK…SSET, and RPTA…HRDD. The dksA C4-type zinc finger occupies 104–128; that stretch reads CEETGEPIGLARLEARPTATMSVEA. Residues 128–142 are compositionally biased toward basic and acidic residues; it reads AQERHERRERVHRDD.

This sequence belongs to the DksA family. In terms of assembly, interacts directly with the RNA polymerase.

The protein localises to the cytoplasm. Transcription factor that acts by binding directly to the RNA polymerase (RNAP). Required for negative regulation of rRNA expression and positive regulation of several amino acid biosynthesis promoters. The chain is RNA polymerase-binding transcription factor DksA from Caulobacter vibrioides (strain ATCC 19089 / CIP 103742 / CB 15) (Caulobacter crescentus).